The sequence spans 283 residues: MSGTDRSQAAGAVPDSDPGLAAVSSAYQRFEPRAYLRNNYAPPRGDLSCPDGVGPWKLRCLAQTFATGEVSGRTLIDIGSGPTIYQLLSACAHFEDITMTDFLEVNRQELRLWLREEPGAFDWSVYSQHVCLIEGKGESWQEKECQLRARVKRILPIDVHRPQPLGAGGLAPLPADALVSAFCLEAVSPDLASFQRALDHITTLLRPGGHLLLIGALEESWYLAGEARLAVVPVREEEVREALVRTATRCGICARTPMPAHLQTGVDDVKGIFFTRAQKKVGV.

A Phosphoserine modification is found at Ser7. Residues Tyr35, Tyr40, 79 to 80 (GS), Tyr85, Asp101, Asn106, 158 to 159 (DV), and Ala181 each bind S-adenosyl-L-methionine. Octopamine is bound by residues Glu219 and Asp267.

Belongs to the class I-like SAM-binding methyltransferase superfamily. NNMT/PNMT/TEMT family. The N-terminus is blocked. As to expression, expressed in the adrenal medulla.

The catalysed reaction is phenylethanolamine + S-adenosyl-L-methionine = N-methylphenylethanolamine + S-adenosyl-L-homocysteine + H(+). The enzyme catalyses (R)-noradrenaline + S-adenosyl-L-methionine = (R)-adrenaline + S-adenosyl-L-homocysteine + H(+). It catalyses the reaction (R)-normetanephrine + S-adenosyl-L-methionine = (R)-metanephrine + S-adenosyl-L-homocysteine + H(+). It carries out the reaction (R)-octopamine + S-adenosyl-L-methionine = (R)-synephrine + S-adenosyl-L-homocysteine + H(+). It participates in catecholamine biosynthesis; (R)-adrenaline biosynthesis; (R)-adrenaline from (R)-noradrenaline: step 1/1. Its activity is regulated as follows. Inhibited by p-hydroxymercuribenzoate and p-chloromercuriphenylsulfonate. Functionally, catalyzes the transmethylation of nonepinephrine (noradrenaline) to form epinephrine (adrenaline), using S-adenosyl-L-methionine as the methyl donor. Other substrates include phenylethanolamine and octopamine. Also methylates normetanephrine. The protein is Phenylethanolamine N-methyltransferase (PNMT) of Bos taurus (Bovine).